The primary structure comprises 119 residues: Protein TusC (119 aa).

Belongs to the DsrF/TusC family. In terms of assembly, heterohexamer, formed by a dimer of trimers. The hexameric TusBCD complex contains 2 copies each of TusB, TusC and TusD. The TusBCD complex interacts with TusE.

Its subcellular location is the cytoplasm. Functionally, part of a sulfur-relay system required for 2-thiolation of 5-methylaminomethyl-2-thiouridine (mnm(5)s(2)U) at tRNA wobble positions. This is Protein TusC from Escherichia coli O157:H7.